The sequence spans 736 residues: Protein DSF2 (736 aa).

Over residues 1 to 10 (MNQNLKNTSW) the composition is skewed to polar residues. Disordered regions lie at residues 1 to 46 (MNQN…DSQF), 178 to 208 (SGMKPQMNRNEKDYKYPNLENGNRSTNSPNP), 229 to 410 (ISDN…SGEN), and 440 to 461 (FKTASTPQSSTDKKKNSKARPN). Basic and acidic residues predominate over residues 14–24 (IGSDDQERKAN). Composition is skewed to polar residues over residues 25–46 (SSEVSQSPPPNNSFESSMDSQF) and 197–208 (ENGNRSTNSPNP). Residues 238 to 256 (NNANSKNNRTTSNNINTST) show a composition bias toward low complexity. Positions 264-284 (KQSCPNEFTTTQKSNCLYRNG) are enriched in polar residues. Composition is skewed to low complexity over residues 285–294 (SSTSTNTSFS), 303–318 (KTQSSFESESSSFSKL), and 335–350 (SNSSTSTITKTNTMTN). Over residues 374–385 (KLFKSPRTRAKN) the composition is skewed to basic residues. The span at 392-410 (EGSSPIRSATNSLDFSGEN) shows a compositional bias: polar residues.

In Saccharomyces cerevisiae (strain ATCC 204508 / S288c) (Baker's yeast), this protein is Protein DSF2 (DSF2).